The following is a 618-amino-acid chain: Origin recognition complex subunit 2 (618 aa).

2 disordered regions span residues 1–116 (MSAS…AAKD) and 149–274 (NATP…KKSN). Thr-24 bears the Phosphothreonine mark. Residues Ser-26 and Ser-30 each carry the phosphoserine modification. Positions 49–59 (TSRRSTRRPSP) are enriched in basic residues. The span at 70–79 (SNGKGQEERI) shows a compositional bias: basic and acidic residues. A phosphoserine mark is found at Ser-87, Ser-91, and Ser-92. A compositionally biased stretch (acidic residues) spans 94–107 (AEDQEEEESIEESE). Phosphothreonine is present on residues Thr-151, Thr-154, Thr-157, Thr-160, Thr-167, Thr-170, and Thr-181. Residues 151–161 (TPCTPKTPKTP) are compositionally biased toward low complexity. Residues 183–193 (AHVRTRVKKQI) are compositionally biased toward basic residues. Over residues 199 to 208 (DSDEDFSGDE) the composition is skewed to acidic residues. Low complexity predominate over residues 219–233 (SSSSSSSDAGNSSDN). Thr-258 bears the Phosphothreonine mark. The residue at position 260 (Ser-260) is a Phosphoserine.

It belongs to the ORC2 family. As to quaternary structure, ORC is composed of six subunits. Interacts with Mcm10. Interacts with CG9890. Interaction between the TREX-2/AMEX complex and the ORC complex is required for ORC localization to mRNPs, and consequently mRNA export.

It is found in the nucleus. It localises to the chromosome. The protein resides in the centromere. In terms of biological role, component of the origin recognition complex (ORC) that binds origins of replication. DNA-binding is ATP-dependent, however specific DNA sequences that define origins of replication have not been identified so far. ORC is required to assemble the pre-replication complex necessary to initiate DNA replication. As part of the ORC complex, might also have a role in mRNA export. The polypeptide is Origin recognition complex subunit 2 (Orc2) (Drosophila melanogaster (Fruit fly)).